Here is a 179-residue protein sequence, read N- to C-terminus: MENVEDKYNSPLKSQKLFIGAQICLRIVTIGATLAATWIMVTDKQSITFGDFVMVAKYNYSSAFKFFVLANVIACACSVVSLLFLCALGRYSSNPGHVFLLFLHDLLMMSLVLAGCSAATAIGFLGKYGNTKSGWMPICDQFGQFCNRGTISMMLSYLSMVCLLILTVTSANKSRQIHV.

At 1–16 (MENVEDKYNSPLKSQK) the chain is on the cytoplasmic side. The helical transmembrane segment at 17–37 (LFIGAQICLRIVTIGATLAAT) threads the bilayer. Topologically, residues 38–65 (WIMVTDKQSITFGDFVMVAKYNYSSAFK) are extracellular. Residue Asn59 is glycosylated (N-linked (GlcNAc...) asparagine). A helical membrane pass occupies residues 66–86 (FFVLANVIACACSVVSLLFLC). Topologically, residues 87–105 (ALGRYSSNPGHVFLLFLHD) are cytoplasmic. Residues 106–126 (LLMMSLVLAGCSAATAIGFLG) traverse the membrane as a helical segment. Over 127–150 (KYGNTKSGWMPICDQFGQFCNRGT) the chain is Extracellular. A helical transmembrane segment spans residues 151-171 (ISMMLSYLSMVCLLILTVTSA). Over 172-179 (NKSRQIHV) the chain is Cytoplasmic.

This sequence belongs to the Casparian strip membrane proteins (CASP) family. Homodimer and heterodimers.

It localises to the cell membrane. The protein is CASP-like protein 1F1 of Ricinus communis (Castor bean).